The primary structure comprises 391 residues: Multidrug resistance protein MdtL (391 aa).

12 consecutive transmembrane segments (helical) span residues 4 to 24 (FLICSFALVLLYPAGIDMYLV), 42 to 62 (IAFSVYLAGMAAAMLFAGKVA), 69 to 89 (PVAIPGAALFIIASVFCSLAE), 93 to 113 (LFLAGRFLQGLGAGCCYVVAF), 134 to 154 (GITCIIPVLAPVLGHLIMLNF), 158 to 178 (SLFWTMAIMGVAVLMLSLFIL), 203 to 222 (FFLSRVVITTLSVSVILTFV), 245 to 265 (ALTAGVSMTVSFSTPFALGIF), 269 to 289 (TLMITSQVLFLAAGITLAVSP), 293 to 313 (VSLFGITLICAGFSVGFGVAM), 331 to 351 (LGIAQVCGSSLWIWLAAVVGI), and 356 to 376 (MLIGILIACSIVSLLLIMFVA).

The protein belongs to the major facilitator superfamily. DHA1 family. MdtL (TC 2.A.1.2.22) subfamily.

It is found in the cell inner membrane. Functionally, confers resistance to chloramphenicol. This is Multidrug resistance protein MdtL from Escherichia coli O81 (strain ED1a).